Here is a 935-residue protein sequence, read N- to C-terminus: MALKSPAFRRKFPLLVTGGLLALQPLATSYVVAAEQFDCQVSAAGGWDCKPKTPVNNLPPRPVHEGAAVSSGTEAAGEAETADRPVLVTEAKGRGLKSRSEDYSHLDWVPREKLTAAQLAETGPYCGGAYIEPTRPGMADTTPKDESPTYINAKVSKYQQEQQVATLAGDVVMRQGSMQAEADEANLYQAENRGELKGNVKIRDNGSLVVGDEAQIQLDTGEAQVDNAEYVMHKSHIRGSALYAKRGENAIIRLKDGTYTTCEPGSNAWQLKGNNITLNPATGFGTATNVTLRVKDFPVFYTPYIYFPIDDRRQSGFLPPSFSTSSDTGFMLVTPYYFNLAPNYDATLYPRYMAKRGLLMEGEFRYLTPSSEGQFGGAYLNDKNDDRKDQTDYKDQRWMVNWQHKGGLDERLMTEVDYTDISDPFYFQDLESDQIGVESRDFLNQQGALTYRGDSYTARLNVHAYEAATISQITPYDRLPQITLNGVLPYQPGGLNFAYETEAARFERDLKNDTVFDKDGNLDLTAGPDGRRLDENIQGIERANGTRLNVAPSISYPMTASYGFLTPKLKYAYTQYDLDLDSKGKADAIALQTANPDAYGSYDSSVSRDVPIFSVDSGLYFDRNTSLFGNNYRQTLEPRMFYLYVPYKDQKDIPLFDTGETLFSYDSLFRDNRFSGTDRIGDENKLSLGVTTRWIEDNGFERQNFSIGQAYYFKDRKVQLPGIDYRTRKDAQSDVSPYALVYNYYFNRDWRFNSDFNWDPDSRSTRSGSAMFHYQPEDNPNKIVNLGYRYRNDTIAYDSTTGTWKVGGGDYGTPGDPNYIKDYYKIQQHDFSVIWPIVPQWNVIARWQHDYNRNRTLEAMGGFEYDNCCWKLRLINRYWIDYDDFSQALPQNEKGDHGVFLQIVLKGLGGVVGNKVESFLDQGIQGYREREDQAY.

The N-terminal stretch at 1 to 33 is a signal peptide; it reads MALKSPAFRRKFPLLVTGGLLALQPLATSYVVA. Positions 52 to 85 are disordered; the sequence is KTPVNNLPPRPVHEGAAVSSGTEAAGEAETADRP. A compositionally biased stretch (low complexity) spans 65 to 79; the sequence is EGAAVSSGTEAAGEA.

It belongs to the LptD family. Component of the lipopolysaccharide transport and assembly complex. Interacts with LptE and LptA.

The protein localises to the cell outer membrane. Together with LptE, is involved in the assembly of lipopolysaccharide (LPS) at the surface of the outer membrane. This is LPS-assembly protein LptD from Pseudomonas putida (strain ATCC 700007 / DSM 6899 / JCM 31910 / BCRC 17059 / LMG 24140 / F1).